The primary structure comprises 275 residues: MTSTSNLIEQVIEAWQNMQAKTPLVQCITNSVAANYTANVLLASGASPAMIDNPYEAESFTKISSALSINLGTPTSEQMQAMQISAKTAQLNNVPWVLDPVGYGPILAWRSQMTDELLQFKPSVIRGNASEISTLAGNQVQSKGVDSTLSSDQAYQQAYVLLAHADCIAISGESDYILSRELDAVIQVNGGSPLQPKITATGCALGALIAAYSAVTTPTIAALSAHIHFAIAGKLAANQAQTMGSFSSIFMDYIHMLDANLIEQYADIKLLDKQA.

Met50 lines the substrate pocket. Residues Arg126 and Ser171 each coordinate ATP. Substrate is bound at residue Ala200.

The protein belongs to the Thz kinase family. Mg(2+) is required as a cofactor.

The catalysed reaction is 5-(2-hydroxyethyl)-4-methylthiazole + ATP = 4-methyl-5-(2-phosphooxyethyl)-thiazole + ADP + H(+). Its pathway is cofactor biosynthesis; thiamine diphosphate biosynthesis; 4-methyl-5-(2-phosphoethyl)-thiazole from 5-(2-hydroxyethyl)-4-methylthiazole: step 1/1. In terms of biological role, catalyzes the phosphorylation of the hydroxyl group of 4-methyl-5-beta-hydroxyethylthiazole (THZ). This is Hydroxyethylthiazole kinase from Acinetobacter baumannii (strain SDF).